Here is a 77-residue protein sequence, read N- to C-terminus: DNA-directed RNA polymerase subunit epsilon (77 aa).

The protein belongs to the RNA polymerase subunit epsilon family. RNAP is composed of a core of 2 alpha, a beta and a beta' subunit. The core is associated with a delta subunit, and at least one of epsilon or omega. When a sigma factor is associated with the core the holoenzyme is formed, which can initiate transcription.

The enzyme catalyses RNA(n) + a ribonucleoside 5'-triphosphate = RNA(n+1) + diphosphate. A non-essential component of RNA polymerase (RNAP). This is DNA-directed RNA polymerase subunit epsilon from Lactobacillus delbrueckii subsp. bulgaricus (strain ATCC 11842 / DSM 20081 / BCRC 10696 / JCM 1002 / NBRC 13953 / NCIMB 11778 / NCTC 12712 / WDCM 00102 / Lb 14).